The primary structure comprises 344 residues: AA9 family lytic polysaccharide monooxygenase D (344 aa).

Positions 1–23 (MKTATSYAAFLLSALAALPHASA) are cleaved as a signal peptide. Cu(2+) is bound at residue His24. A disulfide bridge connects residues Cys70 and Cys193. His179 lines the O2 pocket. Tyr190 serves as a coordination point for Cu(2+). N-linked (GlcNAc...) asparagine glycosylation is found at Asn201 and Asn207. The segment at 240-321 (PPLSNLVSGD…PTTSGNLSAN (82 aa)) is disordered. The segment covering 259–292 (STSSATLSGGAAPTGTASGSTPAGTSQPSSTTGT) has biased composition (low complexity). The segment covering 311-320 (APTTSGNLSA) has biased composition (polar residues). N-linked (GlcNAc...) asparagine glycosylation occurs at Asn317.

Belongs to the polysaccharide monooxygenase AA9 family. Requires Cu(2+) as cofactor.

The protein localises to the secreted. The catalysed reaction is [(1-&gt;4)-beta-D-glucosyl]n+m + reduced acceptor + O2 = 4-dehydro-beta-D-glucosyl-[(1-&gt;4)-beta-D-glucosyl]n-1 + [(1-&gt;4)-beta-D-glucosyl]m + acceptor + H2O.. Functionally, lytic polysaccharide monooxygenase (LPMO) that depolymerizes crystalline and amorphous polysaccharides via the oxidation of scissile alpha- or beta-(1-4)-glycosidic bonds, yielding C1 or C4 oxidation products. Catalysis by LPMOs requires the reduction of the active-site copper from Cu(II) to Cu(I) by a reducing agent and H(2)O(2) or O(2) as a cosubstrate. In Gloeophyllum trabeum (strain ATCC 11539 / FP-39264 / Madison 617) (Brown rot fungus), this protein is AA9 family lytic polysaccharide monooxygenase D.